The following is a 194-amino-acid chain: Large ribosomal subunit protein uL5 (194 aa).

Belongs to the universal ribosomal protein uL5 family. Part of the 50S ribosomal subunit; part of the 5S rRNA/L5/L18/L25 subcomplex. Contacts the 5S rRNA and the P site tRNA. Forms a bridge to the 30S subunit in the 70S ribosome.

In terms of biological role, this is one of the proteins that bind and probably mediate the attachment of the 5S RNA into the large ribosomal subunit, where it forms part of the central protuberance. In the 70S ribosome it contacts protein S13 of the 30S subunit (bridge B1b), connecting the 2 subunits; this bridge is implicated in subunit movement. Contacts the P site tRNA; the 5S rRNA and some of its associated proteins might help stabilize positioning of ribosome-bound tRNAs. This is Large ribosomal subunit protein uL5 from Frankia alni (strain DSM 45986 / CECT 9034 / ACN14a).